Here is a 550-residue protein sequence, read N- to C-terminus: Glucose-6-phosphate isomerase (550 aa).

D-glucose 6-phosphate contacts are provided by residues Gly-163–Ser-164, Ser-214–Thr-219, Gln-358, Glu-362, His-393, and Lys-515. Residue Glu-362 is the Proton donor of the active site. Residues His-393 and Lys-515 contribute to the active site.

The protein belongs to the GPI family. As to quaternary structure, homodimer.

Its subcellular location is the cytoplasm. It carries out the reaction alpha-D-glucose 6-phosphate = beta-D-fructose 6-phosphate. Its pathway is carbohydrate degradation; glycolysis; D-glyceraldehyde 3-phosphate and glycerone phosphate from D-glucose: step 2/4. Functionally, in the cytoplasm, catalyzes the conversion of glucose-6-phosphate to fructose-6-phosphate, the second step in glycolysis, and the reverse reaction during gluconeogenesis. The chain is Glucose-6-phosphate isomerase (PGI1) from Candida albicans (strain SC5314 / ATCC MYA-2876) (Yeast).